A 182-amino-acid polypeptide reads, in one-letter code: UPF0148 protein VNG_2366C (182 aa).

Residues 1-162 are disordered; sequence MSNTDDGFDK…RASDADDPRT (162 aa). Basic and acidic residues-rich tracts occupy residues 7–33 and 47–62; these read GFDK…ETAR and DHCD…HDGE. A compositionally biased stretch (low complexity) spans 105-122; the sequence is PDTSSSTAAATDDVPTAA. Basic and acidic residues predominate over residues 153–162; the sequence is RASDADDPRT.

Belongs to the UPF0148 family.

The protein is UPF0148 protein VNG_2366C of Halobacterium salinarum (strain ATCC 700922 / JCM 11081 / NRC-1) (Halobacterium halobium).